Consider the following 431-residue polypeptide: Ribosomal protein uS12 methylthiotransferase RimO (431 aa).

The 117-residue stretch at 4 to 120 folds into the MTTase N-terminal domain; sequence HKLFLLSLGC…ILAALGAAYH (117 aa). Positions 13, 49, 83, 144, 148, and 151 each coordinate [4Fe-4S] cluster. The Radical SAM core domain occupies 130–359; it reads LTPPHYTYLK…MELQESVSQD (230 aa). The TRAM domain occupies 362–429; the sequence is RDFEGKEITV…PFDLVGEVIG (68 aa).

It belongs to the methylthiotransferase family. RimO subfamily. The cofactor is [4Fe-4S] cluster.

Its subcellular location is the cytoplasm. It catalyses the reaction L-aspartate(89)-[ribosomal protein uS12]-hydrogen + (sulfur carrier)-SH + AH2 + 2 S-adenosyl-L-methionine = 3-methylsulfanyl-L-aspartate(89)-[ribosomal protein uS12]-hydrogen + (sulfur carrier)-H + 5'-deoxyadenosine + L-methionine + A + S-adenosyl-L-homocysteine + 2 H(+). Catalyzes the methylthiolation of an aspartic acid residue of ribosomal protein uS12. This Pelodictyon phaeoclathratiforme (strain DSM 5477 / BU-1) protein is Ribosomal protein uS12 methylthiotransferase RimO.